We begin with the raw amino-acid sequence, 96 residues long: Large ribosomal subunit protein bL27 (96 aa).

Positions 1 to 9 (MLRLDLQFF) are excised as a propeptide.

It belongs to the bacterial ribosomal protein bL27 family. In terms of processing, the N-terminus is cleaved by ribosomal processing cysteine protease Prp.

The polypeptide is Large ribosomal subunit protein bL27 (Geobacillus sp. (strain WCH70)).